Here is a 686-residue protein sequence, read N- to C-terminus: Aminodeoxychorismate synthase (686 aa).

One can recognise a Glutamine amidotransferase type-1 domain in the interval 2–194 (RTLLIDNYDS…RDLALAHHRA (193 aa)). The Nucleophile role is filled by cysteine 81. Active-site residues include histidine 168 and glutamate 170. The tract at residues 233–686 (LDSSSVLEGA…LDGSAVAGAR (454 aa)) is PABB component.

The protein in the C-terminal section; belongs to the anthranilate synthase component I family.

It catalyses the reaction chorismate + L-glutamine = 4-amino-4-deoxychorismate + L-glutamate. Its pathway is antibiotic biosynthesis. In terms of biological role, involved in chloramphenicol biosynthesis. Catalyzes the biosynthesis of 4-amino-4-deoxychorismate (ADC) from chorismate and glutamine. The protein is Aminodeoxychorismate synthase of Streptomyces venezuelae (strain ATCC 10712 / CBS 650.69 / DSM 40230 / JCM 4526 / NBRC 13096 / PD 04745).